We begin with the raw amino-acid sequence, 61 residues long: Large ribosomal subunit protein uL30 (61 aa).

Belongs to the universal ribosomal protein uL30 family. As to quaternary structure, part of the 50S ribosomal subunit.

In Chlorobaculum tepidum (strain ATCC 49652 / DSM 12025 / NBRC 103806 / TLS) (Chlorobium tepidum), this protein is Large ribosomal subunit protein uL30.